Consider the following 418-residue polypeptide: uncharacterized protein (418 aa).

This sequence belongs to the poxviruses C4/C10 family.

This is an uncharacterized protein from Fowlpox virus (strain NVSL) (FPV).